We begin with the raw amino-acid sequence, 173 residues long: Large ribosomal subunit protein uL10 (173 aa).

This sequence belongs to the universal ribosomal protein uL10 family. As to quaternary structure, part of the ribosomal stalk of the 50S ribosomal subunit. The N-terminus interacts with L11 and the large rRNA to form the base of the stalk. The C-terminus forms an elongated spine to which L12 dimers bind in a sequential fashion forming a multimeric L10(L12)X complex.

Functionally, forms part of the ribosomal stalk, playing a central role in the interaction of the ribosome with GTP-bound translation factors. The chain is Large ribosomal subunit protein uL10 from Cupriavidus necator (strain ATCC 17699 / DSM 428 / KCTC 22496 / NCIMB 10442 / H16 / Stanier 337) (Ralstonia eutropha).